Reading from the N-terminus, the 444-residue chain is N-succinylarginine dihydrolase (444 aa).

Substrate-binding positions include Ala19 to Ser28, Asn110, and His137 to Arg138. The active site involves Glu174. Arg214 serves as a coordination point for substrate. The active site involves His250. Residues Asp252 and Asn362 each coordinate substrate. Catalysis depends on Cys368, which acts as the Nucleophile.

This sequence belongs to the succinylarginine dihydrolase family. As to quaternary structure, homodimer.

It catalyses the reaction N(2)-succinyl-L-arginine + 2 H2O + 2 H(+) = N(2)-succinyl-L-ornithine + 2 NH4(+) + CO2. The protein operates within amino-acid degradation; L-arginine degradation via AST pathway; L-glutamate and succinate from L-arginine: step 2/5. In terms of biological role, catalyzes the hydrolysis of N(2)-succinylarginine into N(2)-succinylornithine, ammonia and CO(2). The chain is N-succinylarginine dihydrolase from Shewanella amazonensis (strain ATCC BAA-1098 / SB2B).